The following is a 94-amino-acid chain: Co-chaperonin GroES (94 aa).

Belongs to the GroES chaperonin family. Heptamer of 7 subunits arranged in a ring. Interacts with the chaperonin GroEL.

The protein resides in the cytoplasm. In terms of biological role, together with the chaperonin GroEL, plays an essential role in assisting protein folding. The GroEL-GroES system forms a nano-cage that allows encapsulation of the non-native substrate proteins and provides a physical environment optimized to promote and accelerate protein folding. GroES binds to the apical surface of the GroEL ring, thereby capping the opening of the GroEL channel. In Exiguobacterium sibiricum (strain DSM 17290 / CCUG 55495 / CIP 109462 / JCM 13490 / 255-15), this protein is Co-chaperonin GroES.